A 488-amino-acid chain; its full sequence is Zinc finger protein 345 (488 aa).

C2H2-type zinc fingers lie at residues 62–84 (LECKECGKDFSFVSVLVRHQRIH), 90–112 (YECKECGKAFGSGANLAYHQRIH), 118–140 (FECKECGKAFGSGSNLTHHQRIH), 146–168 (YECKECGKAFSFGSGLIRHQIIH), 174–196 (YECKECGKSFSFESALIRHHRIH), 202–224 (YECIDCGKAFGSGSNLTQHRRIH), 230–252 (YECKACGMAFSSGSALTRHQRIH), 258–280 (YICNECGKAFSFGSALTRHQRIH), 286–308 (YVCKECGKAFNSGSDLTQHQRIH), 314–336 (YECKECEKAFRSGSKLIQHQRMH), 342–364 (YECKECGKTFSSGSDLTQHHRIH), 370–392 (YECKECGKAFGSGSKLIQHQLIH), 398–420 (YECKECGKSFSSGSALNRHQRIH), 426–448 (YECKECGKAFYSGSSLTQHQRIH), and 454–476 (YECKNCGKAYGRDSEFQQHKKSH).

The protein belongs to the krueppel C2H2-type zinc-finger protein family.

The protein resides in the nucleus. Functionally, may be involved in transcriptional regulation. This chain is Zinc finger protein 345 (ZNF345), found in Homo sapiens (Human).